Reading from the N-terminus, the 430-residue chain is Enolase (430 aa).

Q164 provides a ligand contact to (2R)-2-phosphoglycerate. The Proton donor role is filled by E206. The Mg(2+) site is built by D243, E286, and D313. K338, R367, S368, and K389 together coordinate (2R)-2-phosphoglycerate. K338 serves as the catalytic Proton acceptor.

It belongs to the enolase family. As to quaternary structure, component of the RNA degradosome, a multiprotein complex involved in RNA processing and mRNA degradation. Requires Mg(2+) as cofactor.

It is found in the cytoplasm. Its subcellular location is the secreted. It localises to the cell surface. It catalyses the reaction (2R)-2-phosphoglycerate = phosphoenolpyruvate + H2O. Its pathway is carbohydrate degradation; glycolysis; pyruvate from D-glyceraldehyde 3-phosphate: step 4/5. Catalyzes the reversible conversion of 2-phosphoglycerate (2-PG) into phosphoenolpyruvate (PEP). It is essential for the degradation of carbohydrates via glycolysis. This is Enolase from Dichelobacter nodosus (strain VCS1703A).